The sequence spans 210 residues: Probable GTP-binding protein EngB (210 aa).

The region spanning Gln-30 to Leu-204 is the EngB-type G domain. GTP contacts are provided by residues Gly-38–Ser-45, Gly-64–Leu-68, Asp-82–Gly-85, Thr-149–Asp-152, and Leu-182–Ala-185. Positions 45 and 66 each coordinate Mg(2+).

It belongs to the TRAFAC class TrmE-Era-EngA-EngB-Septin-like GTPase superfamily. EngB GTPase family. Requires Mg(2+) as cofactor.

In terms of biological role, necessary for normal cell division and for the maintenance of normal septation. This is Probable GTP-binding protein EngB from Pseudomonas putida (strain W619).